A 331-amino-acid polypeptide reads, in one-letter code: Putative ankyrin repeat protein FPV012 (331 aa).

ANK repeat units follow at residues 11-40 (DGYTSLYKETAKGNIKKVVELLYKGVNPNT), 44-73 (DSYTPLHIAAKTGNIKIIRRLIRYGANVDK), 77-106 (DGYTALLIAICTGDIKTCNVLLDEGANPNY), and 110-139 (YGITPLVRIISYYRPTILKLLMDRGANCNQ).

This chain is Putative ankyrin repeat protein FPV012, found in Vertebrata (FPV).